The following is a 199-amino-acid chain: Holliday junction branch migration complex subunit RuvA (199 aa).

The domain I stretch occupies residues 1-62 (MIAYIKGLLA…EDGIQFFGFA (62 aa)). The interval 63-141 (KEDEKECFLL…GMAAVEHSTL (79 aa)) is domain II. The interval 142–152 (QQSVITTGSGD) is flexible linker. The segment at 152–199 (DEAVEALLALGYSQGEARDAVKKAQKSAPEEDLSALIKIALKELAPSR) is domain III.

It belongs to the RuvA family. As to quaternary structure, homotetramer. Forms an RuvA(8)-RuvB(12)-Holliday junction (HJ) complex. HJ DNA is sandwiched between 2 RuvA tetramers; dsDNA enters through RuvA and exits via RuvB. An RuvB hexamer assembles on each DNA strand where it exits the tetramer. Each RuvB hexamer is contacted by two RuvA subunits (via domain III) on 2 adjacent RuvB subunits; this complex drives branch migration. In the full resolvosome a probable DNA-RuvA(4)-RuvB(12)-RuvC(2) complex forms which resolves the HJ.

Its subcellular location is the cytoplasm. In terms of biological role, the RuvA-RuvB-RuvC complex processes Holliday junction (HJ) DNA during genetic recombination and DNA repair, while the RuvA-RuvB complex plays an important role in the rescue of blocked DNA replication forks via replication fork reversal (RFR). RuvA specifically binds to HJ cruciform DNA, conferring on it an open structure. The RuvB hexamer acts as an ATP-dependent pump, pulling dsDNA into and through the RuvAB complex. HJ branch migration allows RuvC to scan DNA until it finds its consensus sequence, where it cleaves and resolves the cruciform DNA. In Desulforamulus reducens (strain ATCC BAA-1160 / DSM 100696 / MI-1) (Desulfotomaculum reducens), this protein is Holliday junction branch migration complex subunit RuvA.